We begin with the raw amino-acid sequence, 152 residues long: Lipoprotein signal peptidase (152 aa).

3 helical membrane-spanning segments follow: residues 5–25 (LFVL…FWIV), 61–81 (WFFV…LATH), and 84–104 (LNIW…GNFI). Catalysis depends on residues Asp-114 and Asp-130. The helical transmembrane segment at 125–145 (IFNVADSYLTVGVILLVICLW) threads the bilayer.

It belongs to the peptidase A8 family.

The protein localises to the cell membrane. The catalysed reaction is Release of signal peptides from bacterial membrane prolipoproteins. Hydrolyzes -Xaa-Yaa-Zaa-|-(S,diacylglyceryl)Cys-, in which Xaa is hydrophobic (preferably Leu), and Yaa (Ala or Ser) and Zaa (Gly or Ala) have small, neutral side chains.. It participates in protein modification; lipoprotein biosynthesis (signal peptide cleavage). In terms of biological role, this protein specifically catalyzes the removal of signal peptides from prolipoproteins. In Streptococcus pyogenes serotype M18 (strain MGAS8232), this protein is Lipoprotein signal peptidase.